Consider the following 277-residue polypeptide: Large ribosomal subunit protein uL2 (277 aa).

Residues 222–277 form a disordered region; it reads GSVMNPNDHPHGGGEGKAPVGRKAPSTPWGKPALGLKTRNKKAKSDKLIVRRRNQK.

Belongs to the universal ribosomal protein uL2 family. In terms of assembly, part of the 50S ribosomal subunit. Forms a bridge to the 30S subunit in the 70S ribosome.

In terms of biological role, one of the primary rRNA binding proteins. Required for association of the 30S and 50S subunits to form the 70S ribosome, for tRNA binding and peptide bond formation. It has been suggested to have peptidyltransferase activity; this is somewhat controversial. Makes several contacts with the 16S rRNA in the 70S ribosome. This chain is Large ribosomal subunit protein uL2, found in Streptococcus agalactiae serotype Ia (strain ATCC 27591 / A909 / CDC SS700).